A 236-amino-acid polypeptide reads, in one-letter code: E3 ubiquitin-protein ligase ATL41 (236 aa).

The helical transmembrane segment at 31 to 51 (IMLAAVASLSGVILIVFALHL) threads the bilayer. Residues 108–150 (CAVCLSVLKEQDKARELPNCKHIFHVDCVDTWLTTCSTCPVCR) form an RING-type; atypical zinc finger.

Belongs to the RING-type zinc finger family. ATL subfamily.

It is found in the membrane. It catalyses the reaction S-ubiquitinyl-[E2 ubiquitin-conjugating enzyme]-L-cysteine + [acceptor protein]-L-lysine = [E2 ubiquitin-conjugating enzyme]-L-cysteine + N(6)-ubiquitinyl-[acceptor protein]-L-lysine.. It participates in protein modification; protein ubiquitination. E3 ubiquitin-protein ligase able to catalyze polyubiquitination with ubiquitin-conjugating enzyme E2 UBC8, UBC10, UBC11, UBC28, UBC29, UBC30, UBC35 and UBC36 in vitro. The chain is E3 ubiquitin-protein ligase ATL41 (ATL41) from Arabidopsis thaliana (Mouse-ear cress).